Reading from the N-terminus, the 220-residue chain is Fructose-6-phosphate aldolase (220 aa).

Lys-85 acts as the Schiff-base intermediate with substrate in catalysis.

This sequence belongs to the transaldolase family. Type 3A subfamily. In terms of assembly, homodecamer.

The protein localises to the cytoplasm. It carries out the reaction beta-D-fructose 6-phosphate = dihydroxyacetone + D-glyceraldehyde 3-phosphate. Catalyzes the reversible formation of fructose 6-phosphate from dihydroxyacetone and D-glyceraldehyde 3-phosphate via an aldolization reaction. The protein is Fructose-6-phosphate aldolase of Salmonella heidelberg (strain SL476).